The sequence spans 287 residues: Probable WRKY transcription factor 57 (287 aa).

Over residues 86-99 the composition is skewed to low complexity; the sequence is TSTNNNPSATSSSS. Positions 86 to 137 are disordered; sequence TSTNNNPSATSSSSEDPAENSTASAEKTPPPETPVKEKKKAQKRIRQPRFAF. The span at 122–132 shows a compositional bias: basic residues; sequence EKKKAQKRIRQ. Residues 141-206 constitute a DNA-binding region (WRKY); the sequence is SDVDNLEDGY…YEGQHCHQTI (66 aa). Positions 248-287 are disordered; the sequence is DNNAPSPRLPRPTTEDTPAVSTPSEEGLLGDIVPQTMRNP. The segment covering 262–271 has biased composition (polar residues); it reads EDTPAVSTPS.

It belongs to the WRKY group II-c family.

It is found in the nucleus. In terms of biological role, transcription factor. Interacts specifically with the W box (5'-(T)TGAC[CT]-3'), a frequently occurring elicitor-responsive cis-acting element. The sequence is that of Probable WRKY transcription factor 57 (WRKY57) from Arabidopsis thaliana (Mouse-ear cress).